The following is a 291-amino-acid chain: Glutathione S-transferase 2 (291 aa).

The GST N-terminal domain occupies 2-83 (SPVKVFGHPM…YILRKYGGTA (82 aa)). Residues 41–42 (HK), 54–55 (KM), and 67–68 (KS) contribute to the glutathione site. The GST C-terminal domain maps to 93–223 (GIEELAMVDV…RVCKHMPTEF (131 aa)).

It belongs to the GST superfamily. Phi family.

It carries out the reaction RX + glutathione = an S-substituted glutathione + a halide anion + H(+). Functionally, conjugation of reduced glutathione to a wide number of exogenous and endogenous hydrophobic electrophiles. This Triticum aestivum (Wheat) protein is Glutathione S-transferase 2 (GSTA2).